The sequence spans 247 residues: (7aS)-7a-methyl-1,5-dioxo-2,3,5,6,7,7a-hexahydro-1H-indene-carboxyl-CoA hydrolase (247 aa).

This sequence belongs to the enoyl-CoA hydratase/isomerase family.

It catalyses the reaction (7aS)-7a-methyl-1,5-dioxo-2,3,5,6,7,7a-hexahydro-1H-indene-carboxyl-CoA + H2O = (3E)-2-(2-carboxylatoethyl)-3-methyl-6-oxocyclohex-1-ene-1-carboxyl-CoA + H(+). It participates in steroid metabolism; cholesterol degradation. Involved in the final steps of cholesterol and steroid degradation. Catalyzes the hydrolytic ring D opening of (7aS)-7a-methyl-1,5-dioxo-2,3,5,6,7,7a-hexahydro-1H-indene-carboxyl-CoA (HIEC-CoA) to (3E)-2-(2-carboxylatoethyl)-3-methyl-6-oxocyclohex-1-ene-1-carboxyl-CoA (COCHEA-CoA). The protein is (7aS)-7a-methyl-1,5-dioxo-2,3,5,6,7,7a-hexahydro-1H-indene-carboxyl-CoA hydrolase of Mycobacterium tuberculosis (strain ATCC 25618 / H37Rv).